The primary structure comprises 147 residues: D-aminoacyl-tRNA deacylase (147 aa).

Residues 136-137 carry the Gly-cisPro motif, important for rejection of L-amino acids motif; sequence GP.

It belongs to the DTD family. Homodimer.

Its subcellular location is the cytoplasm. It catalyses the reaction glycyl-tRNA(Ala) + H2O = tRNA(Ala) + glycine + H(+). It carries out the reaction a D-aminoacyl-tRNA + H2O = a tRNA + a D-alpha-amino acid + H(+). In terms of biological role, an aminoacyl-tRNA editing enzyme that deacylates mischarged D-aminoacyl-tRNAs. Also deacylates mischarged glycyl-tRNA(Ala), protecting cells against glycine mischarging by AlaRS. Acts via tRNA-based rather than protein-based catalysis; rejects L-amino acids rather than detecting D-amino acids in the active site. By recycling D-aminoacyl-tRNA to D-amino acids and free tRNA molecules, this enzyme counteracts the toxicity associated with the formation of D-aminoacyl-tRNA entities in vivo and helps enforce protein L-homochirality. The polypeptide is D-aminoacyl-tRNA deacylase (Streptococcus dysgalactiae subsp. equisimilis (Streptococcus equisimilis)).